The chain runs to 163 residues: Putative 4-hydroxy-4-methyl-2-oxoglutarate aldolase (163 aa).

Substrate is bound by residues 76–79 (GDML) and Arg-98. An a divalent metal cation-binding site is contributed by Asp-99.

This sequence belongs to the class II aldolase/RraA-like family. As to quaternary structure, homotrimer. Requires a divalent metal cation as cofactor.

The enzyme catalyses 4-hydroxy-4-methyl-2-oxoglutarate = 2 pyruvate. It catalyses the reaction oxaloacetate + H(+) = pyruvate + CO2. Functionally, catalyzes the aldol cleavage of 4-hydroxy-4-methyl-2-oxoglutarate (HMG) into 2 molecules of pyruvate. Also contains a secondary oxaloacetate (OAA) decarboxylase activity due to the common pyruvate enolate transition state formed following C-C bond cleavage in the retro-aldol and decarboxylation reactions. The polypeptide is Putative 4-hydroxy-4-methyl-2-oxoglutarate aldolase (Pseudomonas entomophila (strain L48)).